The following is a 407-amino-acid chain: Multifunctional CCA protein (407 aa).

ATP is bound by residues glycine 8 and arginine 11. The CTP site is built by glycine 8 and arginine 11. The Mg(2+) site is built by aspartate 21 and aspartate 23. Residues arginine 91, arginine 137, and arginine 140 each contribute to the ATP site. 3 residues coordinate CTP: arginine 91, arginine 137, and arginine 140. The HD domain occupies 228–329 (SGIHTLMVAQ…IKIFDKMDVW (102 aa)).

Belongs to the tRNA nucleotidyltransferase/poly(A) polymerase family. Bacterial CCA-adding enzyme type 1 subfamily. Monomer. Can also form homodimers and oligomers. Mg(2+) serves as cofactor. The cofactor is Ni(2+).

The enzyme catalyses a tRNA precursor + 2 CTP + ATP = a tRNA with a 3' CCA end + 3 diphosphate. It carries out the reaction a tRNA with a 3' CCA end + 2 CTP + ATP = a tRNA with a 3' CCACCA end + 3 diphosphate. In terms of biological role, catalyzes the addition and repair of the essential 3'-terminal CCA sequence in tRNAs without using a nucleic acid template. Adds these three nucleotides in the order of C, C, and A to the tRNA nucleotide-73, using CTP and ATP as substrates and producing inorganic pyrophosphate. tRNA 3'-terminal CCA addition is required both for tRNA processing and repair. Also involved in tRNA surveillance by mediating tandem CCA addition to generate a CCACCA at the 3' terminus of unstable tRNAs. While stable tRNAs receive only 3'-terminal CCA, unstable tRNAs are marked with CCACCA and rapidly degraded. The chain is Multifunctional CCA protein from Aliivibrio fischeri (strain MJ11) (Vibrio fischeri).